Consider the following 352-residue polypeptide: C-C chemokine receptor type 5 (352 aa).

Residues 1 to 30 (MDYQVSSPTYDIDYYTSEPCQKINVKQIAG) are Extracellular-facing. Tyrosine 3 carries the post-translational modification Sulfotyrosine. 2 O-linked (GalNAc...) serine glycosylation sites follow: serine 6 and serine 7. Sulfotyrosine occurs at positions 10, 14, and 15. 2 disulfides stabilise this stretch: cysteine 20–cysteine 269 and cysteine 101–cysteine 178. The helical transmembrane segment at 31–58 (RLLPPLYSLVFIFGFVGNILVVLILINC) threads the bilayer. Topologically, residues 59 to 68 (KRLKSMTDIY) are cytoplasmic. A helical transmembrane segment spans residues 69–89 (LLNLAISDLLFLLTVPFWAHY). Residues 90-102 (AAAQWDFGNTMCQ) are Extracellular-facing. Residues 103–124 (LLTGLYFIGFFSGIFFIILLTI) traverse the membrane as a helical segment. Residues 125-141 (DRYLAIVHAVFALKART) are Cytoplasmic-facing. Residues 142-166 (VTFGVVTSVITWVVAVFASLPGIIF) form a helical membrane-spanning segment. Over 167 to 198 (TRSQREGLHYTCSSHFPYSQYQFWKNFQTLKI) the chain is Extracellular. The helical transmembrane segment at 199–218 (VILGLVLPLLVMVICYSGIL) threads the bilayer. The Cytoplasmic segment spans residues 219-235 (KTLLRCRNEKKRHRAVR). The helical transmembrane segment at 236–260 (LIFTIMIVYFLFWAPYNIVLLLNTF) threads the bilayer. Residues 261–277 (QEFFGLNNCSSSNRLDQ) are Extracellular-facing. Residues 278 to 301 (AMQVTETLGMTHCCINPIIYAFVG) traverse the membrane as a helical segment. Residues 302 to 352 (EKFRNYLLVFFQKHIAKRFCKCCSIFQQEAPERASSVYTRSTGEQEISVGL) are Cytoplasmic-facing. 3 S-palmitoyl cysteine lipidation sites follow: cysteine 321, cysteine 323, and cysteine 324. Residues serine 336, serine 337, serine 342, and serine 349 each carry the phosphoserine; by BARK1 modification.

The protein belongs to the G-protein coupled receptor 1 family. In terms of assembly, interacts with PRAF2. Efficient ligand binding to CCL3/MIP-1alpha and CCL4/MIP-1beta requires sulfation, O-glycosylation and sialic acid modifications. Glycosylation on Ser-6 is required for efficient binding of CCL4. Interacts with GRK2. Interacts with ARRB1 and ARRB2. Interacts with CNIH4. Interacts with S100A4; this interaction stimulates T-lymphocyte chemotaxis. Sulfated on at least 2 of the N-terminal tyrosines. Sulfation is required for efficient binding of the chemokines, CCL3 and CCL4. In terms of processing, palmitoylation in the C-terminal is important for cell surface expression. Post-translationally, phosphorylation on serine residues in the C-terminal is stimulated by binding CC chemokines especially by APO-RANTES. O-glycosylated, but not N-glycosylated. Ser-6 appears to be the major site even if Ser-7 may be also O-glycosylated. Also sialylated glycans present which contribute to chemokine binding. Thr-16 and Ser-17 may also be glycosylated and, if so, with small moieties such as a T-antigen.

Its subcellular location is the cell membrane. Its function is as follows. Receptor for a number of inflammatory CC-chemokines including CCL3/MIP-1-alpha, CCL4/MIP-1-beta and RANTES and subsequently transduces a signal by increasing the intracellular calcium ion level. May play a role in the control of granulocytic lineage proliferation or differentiation. Participates in T-lymphocyte migration to the infection site by acting as a chemotactic receptor. This is C-C chemokine receptor type 5 (CCR5) from Theropithecus gelada (Gelada baboon).